The sequence spans 400 residues: uncharacterized protein (400 aa).

The first 31 residues, 1–31 (MENPIKPVATRSIGIAVVLLVVGIVIGFAVG), serve as a signal peptide directing secretion.

Belongs to the bacterial solute-binding protein 1 family. WtpA subfamily.

This is an uncharacterized protein from Thermoplasma acidophilum (strain ATCC 25905 / DSM 1728 / JCM 9062 / NBRC 15155 / AMRC-C165).